Consider the following 30-residue polypeptide: Nattererin-1 (30 aa).

Expressed by the skin glands.

It is found in the secreted. Probably has antibacterial activity. This is Nattererin-1 from Physalaemus nattereri (Cuyaba dwarf frog).